Here is a 433-residue protein sequence, read N- to C-terminus: Glucose-6-phosphate isomerase (433 aa).

The active-site Proton donor is the glutamate 285. Active-site residues include histidine 306 and lysine 421.

Belongs to the GPI family.

Its subcellular location is the cytoplasm. The catalysed reaction is alpha-D-glucose 6-phosphate = beta-D-fructose 6-phosphate. Its pathway is carbohydrate biosynthesis; gluconeogenesis. It participates in carbohydrate degradation; glycolysis; D-glyceraldehyde 3-phosphate and glycerone phosphate from D-glucose: step 2/4. Catalyzes the reversible isomerization of glucose-6-phosphate to fructose-6-phosphate. This is Glucose-6-phosphate isomerase from Mycoplasma mobile (strain ATCC 43663 / 163K / NCTC 11711) (Mesomycoplasma mobile).